A 294-amino-acid chain; its full sequence is Cytidine deaminase (294 aa).

2 consecutive CMP/dCMP-type deaminase domains span residues 48-168 (DEDA…FGPK) and 186-294 (LTGD…VLLG). 89–91 (NME) provides a ligand contact to substrate. His-102 contributes to the Zn(2+) binding site. Glu-104 acts as the Proton donor in catalysis. Residues Cys-129 and Cys-132 each contribute to the Zn(2+) site.

The protein belongs to the cytidine and deoxycytidylate deaminase family. As to quaternary structure, homodimer. The cofactor is Zn(2+).

It catalyses the reaction cytidine + H2O + H(+) = uridine + NH4(+). The enzyme catalyses 2'-deoxycytidine + H2O + H(+) = 2'-deoxyuridine + NH4(+). In terms of biological role, this enzyme scavenges exogenous and endogenous cytidine and 2'-deoxycytidine for UMP synthesis. The polypeptide is Cytidine deaminase (Salmonella schwarzengrund (strain CVM19633)).